The following is a 460-amino-acid chain: Bifunctional protein GlmU (460 aa).

Positions 1–235 (MALSAAIVLA…PLTVEGVNDR (235 aa)) are pyrophosphorylase. Residues 9-12 (LAAG), Lys-23, Gln-76, and 81-82 (GT) each bind UDP-N-acetyl-alpha-D-glucosamine. Position 109 (Asp-109) interacts with Mg(2+). UDP-N-acetyl-alpha-D-glucosamine is bound by residues Gly-146, Glu-161, Asn-176, and Asn-233. Asn-233 contacts Mg(2+). Residues 236-256 (VQLAALSKTYNRRVCERWMRN) are linker. The interval 257–460 (GVTILDPETT…VEGWKPAWER (204 aa)) is N-acetyltransferase. UDP-N-acetyl-alpha-D-glucosamine is bound by residues Arg-338 and Lys-356. His-368 serves as the catalytic Proton acceptor. Positions 371 and 382 each coordinate UDP-N-acetyl-alpha-D-glucosamine. Residues 391–392 (NY) and Ala-428 contribute to the acetyl-CoA site.

In the N-terminal section; belongs to the N-acetylglucosamine-1-phosphate uridyltransferase family. It in the C-terminal section; belongs to the transferase hexapeptide repeat family. Homotrimer. Requires Mg(2+) as cofactor.

It localises to the cytoplasm. It carries out the reaction alpha-D-glucosamine 1-phosphate + acetyl-CoA = N-acetyl-alpha-D-glucosamine 1-phosphate + CoA + H(+). The catalysed reaction is N-acetyl-alpha-D-glucosamine 1-phosphate + UTP + H(+) = UDP-N-acetyl-alpha-D-glucosamine + diphosphate. Its pathway is nucleotide-sugar biosynthesis; UDP-N-acetyl-alpha-D-glucosamine biosynthesis; N-acetyl-alpha-D-glucosamine 1-phosphate from alpha-D-glucosamine 6-phosphate (route II): step 2/2. It participates in nucleotide-sugar biosynthesis; UDP-N-acetyl-alpha-D-glucosamine biosynthesis; UDP-N-acetyl-alpha-D-glucosamine from N-acetyl-alpha-D-glucosamine 1-phosphate: step 1/1. The protein operates within bacterial outer membrane biogenesis; LPS lipid A biosynthesis. Catalyzes the last two sequential reactions in the de novo biosynthetic pathway for UDP-N-acetylglucosamine (UDP-GlcNAc). The C-terminal domain catalyzes the transfer of acetyl group from acetyl coenzyme A to glucosamine-1-phosphate (GlcN-1-P) to produce N-acetylglucosamine-1-phosphate (GlcNAc-1-P), which is converted into UDP-GlcNAc by the transfer of uridine 5-monophosphate (from uridine 5-triphosphate), a reaction catalyzed by the N-terminal domain. The polypeptide is Bifunctional protein GlmU (Bifidobacterium longum subsp. infantis (strain ATCC 15697 / DSM 20088 / JCM 1222 / NCTC 11817 / S12)).